The sequence spans 102 residues: Cytochrome c3 (102 aa).

Heme c contacts are provided by His26, His29, Cys34, Cys37, His38, His39, Cys50, Cys55, His56, His73, Cys81, Cys84, His85, Cys95, Cys98, and His99.

It depends on heme as a cofactor.

The protein localises to the periplasm. In terms of biological role, participates in sulfate respiration coupled with phosphorylation by transferring electrons from the enzyme dehydrogenase to ferredoxin. The protein is Cytochrome c3 of Desulfovibrio desulfuricans.